Reading from the N-terminus, the 24-residue chain is uncharacterized protein (24 aa).

This is an uncharacterized protein from Schizosaccharomyces pombe (strain 972 / ATCC 24843) (Fission yeast).